The primary structure comprises 332 residues: GTPase Obg (332 aa).

The Obg domain occupies 1–159; that stretch reads MKFLDQAKIY…RWVWLRLKLI (159 aa). Residues 160–328 form the OBG-type G domain; the sequence is ADAGLVGLPN…VLRETLRMIR (169 aa). GTP contacts are provided by residues 166 to 173, 191 to 195, 213 to 216, 280 to 283, and 309 to 311; these read GLPNAGKS, FTTLH, DIPG, NKMD, and SAA. Mg(2+) contacts are provided by Ser-173 and Thr-193.

The protein belongs to the TRAFAC class OBG-HflX-like GTPase superfamily. OBG GTPase family. As to quaternary structure, monomer. It depends on Mg(2+) as a cofactor.

Its subcellular location is the cytoplasm. Functionally, an essential GTPase which binds GTP, GDP and possibly (p)ppGpp with moderate affinity, with high nucleotide exchange rates and a fairly low GTP hydrolysis rate. Plays a role in control of the cell cycle, stress response, ribosome biogenesis and in those bacteria that undergo differentiation, in morphogenesis control. The sequence is that of GTPase Obg from Acidiphilium cryptum (strain JF-5).